The primary structure comprises 407 residues: MMVFAFWKVFLILNCLAGQVSMVQVTIPDTFVNVTVGSNVTLLCLYTTTEKSLEKLSIQWSFFHNKEMEEPISIYYSEGGQASAIGQFKDRIIGATNPGNASITILHMQPADSGIYICDVNNPPHFVGKNQGLLDVTVLVKPSKPFCTIQGRPEAGHPISLSCLSAFGTPSPLYYWYNIEGNTIVPVKESFNTATGVLVIGNLTNFEQGYYQCTAINSLGNSSCEIDLTSSHPEVGIIIGALVGALIGAAVIICVVYFARNKVKSKQQKNLNSSTELEPMTKVHHPQQSEAISADGVQLEGTLPSSIHAGHNTEPTTTAVLEPEYEPNPPLETTTQPDPEPEGSVPVLAPEAEIQPHPELDPETETEPEPEPEPKPEPEPEPELEPDPQSGVIIEPLSKAGEDTVKA.

The first 22 residues, 1 to 22 (MMVFAFWKVFLILNCLAGQVSM), serve as a signal peptide directing secretion. Residues 23–134 (VQVTIPDTFV…HFVGKNQGLL (112 aa)) form the Ig-like V-type domain. Topologically, residues 23 to 234 (VQVTIPDTFV…EIDLTSSHPE (212 aa)) are extracellular. The N-linked (GlcNAc...) asparagine glycan is linked to N39. 2 disulfides stabilise this stretch: C44–C118 and C163–C213. An Ig-like C2-type domain is found at 145-229 (PFCTIQGRPE…GNSSCEIDLT (85 aa)). N-linked (GlcNAc...) asparagine glycans are attached at residues N202 and N221. The helical transmembrane segment at 235–255 (VGIIIGALVGALIGAAVIICV) threads the bilayer. The Cytoplasmic portion of the chain corresponds to 256 to 407 (VYFARNKVKS…SKAGEDTVKA (152 aa)). Disordered stretches follow at residues 268-289 (QKNL…PQQS) and 318-407 (TAVL…TVKA). S273 and S274 each carry phosphoserine. The segment covering 361–371 (DPETETEPEPE) has biased composition (acidic residues).

It localises to the membrane. The polypeptide is V-set and immunoglobulin domain-containing protein 1 (Vsig1) (Mus musculus (Mouse)).